Reading from the N-terminus, the 453-residue chain is Tubulin alpha chain (453 aa).

Glutamine 11 lines the GTP pocket. An N6-acetyllysine modification is found at lysine 40. Residues glutamate 71, glycine 144, threonine 145, threonine 179, asparagine 206, and asparagine 228 each contribute to the GTP site. Glutamate 71 contacts Mg(2+). The active site involves glutamate 254.

The protein belongs to the tubulin family. As to quaternary structure, dimer of alpha and beta chains. A typical microtubule is a hollow water-filled tube with an outer diameter of 25 nm and an inner diameter of 15 nM. Alpha-beta heterodimers associate head-to-tail to form protofilaments running lengthwise along the microtubule wall with the beta-tubulin subunit facing the microtubule plus end conferring a structural polarity. Microtubules usually have 13 protofilaments but different protofilament numbers can be found in some organisms and specialized cells. Mg(2+) serves as cofactor. Undergoes a tyrosination/detyrosination cycle, the cyclic removal and re-addition of a C-terminal tyrosine residue by the enzymes tubulin tyrosine carboxypeptidase (TTCP) and tubulin tyrosine ligase (TTL), respectively. In terms of processing, acetylation of alpha chains at Lys-40 stabilizes microtubules and affects affinity and processivity of microtubule motors. This modification has a role in multiple cellular functions, ranging from cell motility, cell cycle progression or cell differentiation to intracellular trafficking and signaling.

It is found in the cytoplasm. The protein localises to the cytoskeleton. The enzyme catalyses GTP + H2O = GDP + phosphate + H(+). Functionally, tubulin is the major constituent of microtubules, a cylinder consisting of laterally associated linear protofilaments composed of alpha- and beta-tubulin heterodimers. Microtubules grow by the addition of GTP-tubulin dimers to the microtubule end, where a stabilizing cap forms. Below the cap, tubulin dimers are in GDP-bound state, owing to GTPase activity of alpha-tubulin. The chain is Tubulin alpha chain (TUBA) from Neospora caninum (Coccidian parasite).